A 322-amino-acid polypeptide reads, in one-letter code: Serine protease Lpg1137 (322 aa).

Residue Ser-68 is part of the active site.

The protein localises to the secreted. The protein resides in the host mitochondrion membrane. Its function is as follows. Serine protease effector that inhibits host cell autophagy by targeting SNX17. Localizes to the host endoplasmic reticulum-mitochondria contact site and catalyzes degradation of host SNX17, thereby impairing endoplasmic reticulum-mitochondria communication, leading to inhibit autophagy as well as staurosporine-induced apoptosis. The protein is Serine protease Lpg1137 of Legionella pneumophila subsp. pneumophila (strain Philadelphia 1 / ATCC 33152 / DSM 7513).